We begin with the raw amino-acid sequence, 20 residues long: Venom peptide Ocy8 (20 aa).

As to expression, expressed by the venom gland.

Its subcellular location is the secreted. This is Venom peptide Ocy8 from Opisthacanthus cayaporum (South American scorpion).